The following is a 52-amino-acid chain: Conotoxin Cal6.25 (52 aa).

An N-terminal signal peptide occupies residues 1 to 22 (MKLTHVLIVAVLVLTVCHLTMA). 3 disulfides stabilise this stretch: Cys-24–Cys-41, Cys-31–Cys-45, and Cys-40–Cys-50.

In terms of tissue distribution, expressed by the venom duct.

It localises to the secreted. Its function is as follows. Probable neurotoxin. In Californiconus californicus (California cone), this protein is Conotoxin Cal6.25.